Consider the following 138-residue polypeptide: Transposon Tn10 TetD protein (138 aa).

An HTH araC/xylS-type domain is found at 31-129 (KDVLLWIEHN…KVTPSYYRRN (99 aa)). 2 DNA-binding regions (H-T-H motif) span residues 48 to 69 (DDVA…KKVT) and 96 to 119 (ILEI…KYIF).

This is Transposon Tn10 TetD protein (tetD) from Escherichia coli.